The primary structure comprises 224 residues: Deoxyribose-phosphate aldolase (224 aa).

The active-site Proton donor/acceptor is D92. The active-site Schiff-base intermediate with acetaldehyde is the K154. The active-site Proton donor/acceptor is the K183.

Belongs to the DeoC/FbaB aldolase family. DeoC type 1 subfamily.

Its subcellular location is the cytoplasm. The catalysed reaction is 2-deoxy-D-ribose 5-phosphate = D-glyceraldehyde 3-phosphate + acetaldehyde. Its pathway is carbohydrate degradation; 2-deoxy-D-ribose 1-phosphate degradation; D-glyceraldehyde 3-phosphate and acetaldehyde from 2-deoxy-alpha-D-ribose 1-phosphate: step 2/2. In terms of biological role, catalyzes a reversible aldol reaction between acetaldehyde and D-glyceraldehyde 3-phosphate to generate 2-deoxy-D-ribose 5-phosphate. This is Deoxyribose-phosphate aldolase from Mannheimia succiniciproducens (strain KCTC 0769BP / MBEL55E).